The primary structure comprises 272 residues: Polar tube protein 2 (272 aa).

The N-terminal stretch at 1–21 (MLLLFTVVTLVSAAQVAPVTP) is a signal peptide. Asn-134 carries N-linked (GlcNAc...) asparagine glycosylation. The segment at 231–272 (RAIQKKEVKESSKDGEKSSTQNGEGTTDDEDGQQSPDGNGPE) is disordered. A compositionally biased stretch (basic and acidic residues) spans 234–247 (QKKEVKESSKDGEK). Positions 263 to 272 (QQSPDGNGPE) are enriched in polar residues.

The protein localises to the spore polar tube. In terms of biological role, involved in formation of a polar tube through which the infectious agent is passed on to the host cell. The chain is Polar tube protein 2 (PTP2) from Encephalitozoon hellem (Microsporidian parasite).